A 447-amino-acid chain; its full sequence is Na(+)-translocating NADH-quinone reductase subunit A (447 aa).

It belongs to the NqrA family. As to quaternary structure, composed of six subunits; NqrA, NqrB, NqrC, NqrD, NqrE and NqrF.

It carries out the reaction a ubiquinone + n Na(+)(in) + NADH + H(+) = a ubiquinol + n Na(+)(out) + NAD(+). NQR complex catalyzes the reduction of ubiquinone-1 to ubiquinol by two successive reactions, coupled with the transport of Na(+) ions from the cytoplasm to the periplasm. NqrA to NqrE are probably involved in the second step, the conversion of ubisemiquinone to ubiquinol. This Neisseria meningitidis serogroup A / serotype 4A (strain DSM 15465 / Z2491) protein is Na(+)-translocating NADH-quinone reductase subunit A.